Reading from the N-terminus, the 443-residue chain is Protoheme IX farnesyltransferase, mitochondrial (443 aa).

A run of 7 helical transmembrane segments spans residues 174–194 (AAGFALAPGPFDWPCFLLTSV), 235–255 (LAVSFATCCAVPGVAILTLGV), 257–277 (PLTGALGLFNIFLYTCCYTPL), 280–300 (ISIANTWVGAVVGAIPPVMGW), 309–329 (AGAFLLGGILYSWQFPHFNAL), 364–384 (LLVLSAAAPVLDITTWTFPIM), and 411–431 (LFFCSLWHLPLLLLLMLTCKR).

The protein belongs to the UbiA prenyltransferase family.

It is found in the mitochondrion membrane. The catalysed reaction is heme b + (2E,6E)-farnesyl diphosphate + H2O = Fe(II)-heme o + diphosphate. In terms of biological role, converts protoheme IX and farnesyl diphosphate to heme O. The chain is Protoheme IX farnesyltransferase, mitochondrial (COX10) from Pongo abelii (Sumatran orangutan).